Reading from the N-terminus, the 250-residue chain is Probable transcriptional regulatory protein Emin_1151 (250 aa).

This sequence belongs to the TACO1 family.

Its subcellular location is the cytoplasm. In Elusimicrobium minutum (strain Pei191), this protein is Probable transcriptional regulatory protein Emin_1151.